Here is a 1035-residue protein sequence, read N- to C-terminus: Enteropeptidase (1035 aa).

A lipid anchor (N-myristoyl glycine) is attached at G2. Topologically, residues 2–18 (GSKRSVPSRHRSLTTYE) are cytoplasmic. A helical; Signal-anchor for type II membrane protein transmembrane segment spans residues 19–47 (VMFAVLFVILVALCAGLIAVSWLSIQGSV). Residues 48 to 1035 (KDAAFGKSHE…FTEWIQSFLH (988 aa)) are Extracellular-facing. The SEA domain occupies 54–169 (KSHEARGTLK…NSIDITASLE (116 aa)). N116, N147, N170, and N194 each carry an N-linked (GlcNAc...) asparagine glycan. The 42-residue stretch at 197–238 (IECPPDSRLCADALKCIAIDLFCDGELNCPDGSDEDNKTCAT) folds into the LDL-receptor class A 1 domain. Intrachain disulfides connect C199–C212, C206–C225, C219–C236, and C240–C269. N-linked (GlcNAc...) asparagine glycosylation is found at N233, N263, N264, N404, N456, N486, N519, N550, and N646. Residues 240 to 350 (CDGRFLLTGS…IGFKVTYTAF (111 aa)) form the CUB 1 domain. The region spanning 358–520 (YEKINCNFED…ISLTYGICNV (163 aa)) is the MAM domain. C540 and C568 are disulfide-bonded. Residues 540 to 650 (CGGPHDLWEP…QGFKANFTTG (111 aa)) form the CUB 2 domain. An LDL-receptor class A 2 domain is found at 657–695 (EPCKEDNFQCKDGECIPLVNLCDGFPHCKDGSDEAHCVR). 3 disulfide bridges follow: C659-C671, C666-C684, and C678-C693. Residues 694 to 787 (VRLFNGTTDS…LILLQCNYKS (94 aa)) form the SRCR domain. Residues N698, N722, N741, and N762 are each glycosylated (N-linked (GlcNAc...) asparagine). 6 disulfides stabilise this stretch: C773/C783, C788/C912, C826/C842, C926/C993, C957/C972, and C983/C1011. The Peptidase S1 domain occupies 801-1035 (IVGGSDSREG…FTEWIQSFLH (235 aa)). The Charge relay system role is filled by H841. A glycan (N-linked (GlcNAc...) asparagine) is linked at N864. Residue D892 is the Charge relay system of the active site. N903 and N965 each carry an N-linked (GlcNAc...) asparagine glycan. Catalysis depends on S987, which acts as the Charge relay system.

This sequence belongs to the peptidase S1 family. In terms of assembly, heterodimer of a catalytic (light) chain and a multidomain (heavy) chain linked by a disulfide bond. The chains are derived from a single precursor that is cleaved by a trypsin-like protease. As to expression, intestinal brush border.

It is found in the membrane. The enzyme catalyses Activation of trypsinogen by selective cleavage of 6-Lys-|-Ile-7 bond.. Responsible for initiating activation of pancreatic proteolytic proenzymes (trypsin, chymotrypsin and carboxypeptidase A). It catalyzes the conversion of trypsinogen to trypsin which in turn activates other proenzymes including chymotrypsinogen, procarboxypeptidases, and proelastases. In Bos taurus (Bovine), this protein is Enteropeptidase (TMPRSS15).